The following is a 455-amino-acid chain: C4-dicarboxylate transport protein (455 aa).

8 consecutive transmembrane segments (helical) span residues 20-40, 59-79, 91-111, 160-180, 209-229, 231-251, 344-364, and 367-387; these read HLYF…HFYP, MIIA…MGTL, GYFL…ANVI, GNIL…ILIG, PIGA…ASVV, LATL…VVLG, LLLV…AGFI, and AATL…ILGV.

It belongs to the dicarboxylate/amino acid:cation symporter (DAACS) (TC 2.A.23) family.

It localises to the cell inner membrane. Functionally, responsible for the transport of dicarboxylates such as succinate, fumarate, and malate from the periplasm across the membrane. The polypeptide is C4-dicarboxylate transport protein (Paracoccus denitrificans (strain Pd 1222)).